The sequence spans 318 residues: tRNA-modifying protein YgfZ (318 aa).

Folate contacts are provided by tryptophan 24 and tryptophan 185.

This sequence belongs to the tRNA-modifying YgfZ family.

The protein localises to the cytoplasm. Its function is as follows. Folate-binding protein involved in regulating the level of ATP-DnaA and in the modification of some tRNAs. It is probably a key factor in regulatory networks that act via tRNA modification, such as initiation of chromosomal replication. The chain is tRNA-modifying protein YgfZ from Buchnera aphidicola subsp. Baizongia pistaciae (strain Bp).